We begin with the raw amino-acid sequence, 620 residues long: Chaperone protein HscA homolog (620 aa).

The protein belongs to the heat shock protein 70 family.

In terms of biological role, chaperone involved in the maturation of iron-sulfur cluster-containing proteins. Has a low intrinsic ATPase activity which is markedly stimulated by HscB. This Pseudomonas putida (strain ATCC 47054 / DSM 6125 / CFBP 8728 / NCIMB 11950 / KT2440) protein is Chaperone protein HscA homolog.